Here is a 146-residue protein sequence, read N- to C-terminus: Flagellar assembly factor FliW (146 aa).

It belongs to the FliW family. As to quaternary structure, interacts with translational regulator CsrA and flagellin(s).

Its subcellular location is the cytoplasm. In terms of biological role, acts as an anti-CsrA protein, binds CsrA and prevents it from repressing translation of its target genes, one of which is flagellin. Binds to flagellin and participates in the assembly of the flagellum. The protein is Flagellar assembly factor FliW of Shouchella clausii (strain KSM-K16) (Alkalihalobacillus clausii).